The chain runs to 394 residues: Elongation factor Tu (394 aa).

Positions 10–204 (KPHVNVGTIG…ALDTYIPEPE (195 aa)) constitute a tr-type G domain. The interval 19–26 (GHVDHGKT) is G1. 19–26 (GHVDHGKT) lines the GTP pocket. Mg(2+) is bound at residue Thr-26. The segment at 60 to 64 (GITIA) is G2. The interval 81–84 (DCPG) is G3. Residues 81-85 (DCPGH) and 136-139 (NKCD) each bind GTP. Residues 136-139 (NKCD) are G4. The segment at 174-176 (SAL) is G5.

It belongs to the TRAFAC class translation factor GTPase superfamily. Classic translation factor GTPase family. EF-Tu/EF-1A subfamily. In terms of assembly, monomer.

Its subcellular location is the cytoplasm. The catalysed reaction is GTP + H2O = GDP + phosphate + H(+). GTP hydrolase that promotes the GTP-dependent binding of aminoacyl-tRNA to the A-site of ribosomes during protein biosynthesis. This is Elongation factor Tu from Vibrio parahaemolyticus serotype O3:K6 (strain RIMD 2210633).